A 280-amino-acid chain; its full sequence is 2-dehydro-3-deoxyphosphooctonate aldolase (280 aa).

The protein belongs to the KdsA family.

It is found in the cytoplasm. The catalysed reaction is D-arabinose 5-phosphate + phosphoenolpyruvate + H2O = 3-deoxy-alpha-D-manno-2-octulosonate-8-phosphate + phosphate. It participates in carbohydrate biosynthesis; 3-deoxy-D-manno-octulosonate biosynthesis; 3-deoxy-D-manno-octulosonate from D-ribulose 5-phosphate: step 2/3. It functions in the pathway bacterial outer membrane biogenesis; lipopolysaccharide biosynthesis. The chain is 2-dehydro-3-deoxyphosphooctonate aldolase from Colwellia psychrerythraea (strain 34H / ATCC BAA-681) (Vibrio psychroerythus).